Reading from the N-terminus, the 410-residue chain is UDP-N-acetylglucosamine--N-acetylmuramyl-(pentapeptide) pyrophosphoryl-undecaprenol N-acetylglucosamine transferase (410 aa).

A disordered region spans residues 1–35; that stretch reads MKDTVSQPAGGRGATAPRPADAASPSCGSSPSADS. Low complexity predominate over residues 14 to 35; that stretch reads ATAPRPADAASPSCGSSPSADS. Residues 45–47, N167, R204, S238, and Q334 contribute to the UDP-N-acetyl-alpha-D-glucosamine site; that span reads TAG.

It belongs to the glycosyltransferase 28 family. MurG subfamily.

The protein localises to the cell membrane. It catalyses the reaction di-trans,octa-cis-undecaprenyl diphospho-N-acetyl-alpha-D-muramoyl-L-alanyl-D-glutamyl-meso-2,6-diaminopimeloyl-D-alanyl-D-alanine + UDP-N-acetyl-alpha-D-glucosamine = di-trans,octa-cis-undecaprenyl diphospho-[N-acetyl-alpha-D-glucosaminyl-(1-&gt;4)]-N-acetyl-alpha-D-muramoyl-L-alanyl-D-glutamyl-meso-2,6-diaminopimeloyl-D-alanyl-D-alanine + UDP + H(+). It participates in cell wall biogenesis; peptidoglycan biosynthesis. In terms of biological role, cell wall formation. Catalyzes the transfer of a GlcNAc subunit on undecaprenyl-pyrophosphoryl-MurNAc-pentapeptide (lipid intermediate I) to form undecaprenyl-pyrophosphoryl-MurNAc-(pentapeptide)GlcNAc (lipid intermediate II). The chain is UDP-N-acetylglucosamine--N-acetylmuramyl-(pentapeptide) pyrophosphoryl-undecaprenol N-acetylglucosamine transferase from Mycobacterium tuberculosis (strain ATCC 25177 / H37Ra).